The primary structure comprises 79 residues: uncharacterized protein (79 aa).

The disordered stretch occupies residues 1–37 (MQLDVFSRMMFGDAAKPTEEKEEEQQEEVSQVSQTND).

This is an uncharacterized protein from Bacillus subtilis (strain 168).